A 346-amino-acid chain; its full sequence is Biotin synthase (346 aa).

The Radical SAM core domain occupies 38–256 (RQVQVSTLLS…IAVARIMMPT (219 aa)). 3 residues coordinate [4Fe-4S] cluster: Cys-53, Cys-57, and Cys-60. The [2Fe-2S] cluster site is built by Cys-97, Cys-128, Cys-188, and Arg-260.

It belongs to the radical SAM superfamily. Biotin synthase family. As to quaternary structure, homodimer. Requires [4Fe-4S] cluster as cofactor. [2Fe-2S] cluster serves as cofactor.

The catalysed reaction is (4R,5S)-dethiobiotin + (sulfur carrier)-SH + 2 reduced [2Fe-2S]-[ferredoxin] + 2 S-adenosyl-L-methionine = (sulfur carrier)-H + biotin + 2 5'-deoxyadenosine + 2 L-methionine + 2 oxidized [2Fe-2S]-[ferredoxin]. The protein operates within cofactor biosynthesis; biotin biosynthesis; biotin from 7,8-diaminononanoate: step 2/2. Functionally, catalyzes the conversion of dethiobiotin (DTB) to biotin by the insertion of a sulfur atom into dethiobiotin via a radical-based mechanism. The chain is Biotin synthase from Escherichia coli (strain K12 / DH10B).